The chain runs to 237 residues: MLEEDMEVAIKMVVVGNGAVGKSSMIQRYCKGIFTKDYKKTIGVDFLERQIQVNDEDVRLMLWDTAGQEEFDAITKAYYRGAQACVLVFSTTDRESFEAVSSWREKVVAEVGDIPTVLVQNKIDLLDDSCIKNEEAEALAKRLKLRFYRTSVKEDLNVNEVFKYLAEKYLQKLKQQIAEDPELTHSSSNKIGVFNTSGGSHSGQNSGTLNGGDVINLRPNKQRTKKNRNPFSSCSIP.

GTP contacts are provided by Val20, Gly21, Lys22, Ser23, Ser24, Tyr38, and Thr41. Mg(2+) is bound at residue Ser23. Positions 28–46 (RYCKGIFTKDYKKTIGVDF) match the Switch 1 motif. The Mg(2+) site is built by Thr41 and Asp64. Positions 65 to 84 (TAGQEEFDAITKAYYRGAQA) match the Switch 2 motif. Gly67, Asn121, Lys122, Asp124, Ser151, Val152, and Lys153 together coordinate GTP. Ser186 and Ser187 each carry phosphoserine. Polar residues predominate over residues 188-208 (SNKIGVFNTSGGSHSGQNSGT). The segment at 188-237 (SNKIGVFNTSGGSHSGQNSGTLNGGDVINLRPNKQRTKKNRNPFSSCSIP) is disordered. Cys234 carries the cysteine methyl ester modification. Cys234 is lipidated: S-geranylgeranyl cysteine. Positions 235-237 (SIP) are cleaved as a propeptide — removed in mature form.

Belongs to the small GTPase superfamily. Rab family. In terms of assembly, interacts with SUFU. The cofactor is Mg(2+).

The protein resides in the cell membrane. Its subcellular location is the cytoplasm. It localises to the cytoplasmic vesicle. The protein localises to the autophagosome. It is found in the endosome membrane. The protein resides in the phagosome. Its subcellular location is the phagosome membrane. The enzyme catalyses GTP + H2O = GDP + phosphate + H(+). With respect to regulation, regulated by guanine nucleotide exchange factors (GEFs) which promote the exchange of bound GDP for free GTP. Regulated by GTPase activating proteins (GAPs) which increase the GTP hydrolysis activity. Inhibited by GDP dissociation inhibitors (GDIs). Functionally, the small GTPases Rab are key regulators of intracellular membrane trafficking, from the formation of transport vesicles to their fusion with membranes. Rabs cycle between an inactive GDP-bound form and an active GTP-bound form that is able to recruit to membranes different set of downstream effectors directly responsible for vesicle formation, movement, tethering and fusion. Together with SUFU, prevents nuclear import of GLI1, and thereby inhibits GLI1 transcription factor activity. Regulates GLI1 in differentiating chondrocytes. Likewise, regulates GLI3 proteolytic processing and modulates GLI2 and GLI3 transcription factor activity. Plays a role in autophagic vacuole assembly, and mediates defense against pathogens, such as S.aureus, by promoting their capture by autophagosomes that then merge with lysosomes. This chain is Ras-related protein Rab-23, found in Homo sapiens (Human).